Here is a 494-residue protein sequence, read N- to C-terminus: UPF0371 protein SEQ_1471 (494 aa).

The protein belongs to the UPF0371 family.

This is UPF0371 protein SEQ_1471 from Streptococcus equi subsp. equi (strain 4047).